A 1370-amino-acid polypeptide reads, in one-letter code: DNA-directed RNA polymerase subunit beta (1370 aa).

This sequence belongs to the RNA polymerase beta chain family. The RNAP catalytic core consists of 2 alpha, 1 beta, 1 beta' and 1 omega subunit. When a sigma factor is associated with the core the holoenzyme is formed, which can initiate transcription.

The catalysed reaction is RNA(n) + a ribonucleoside 5'-triphosphate = RNA(n+1) + diphosphate. Functionally, DNA-dependent RNA polymerase catalyzes the transcription of DNA into RNA using the four ribonucleoside triphosphates as substrates. The chain is DNA-directed RNA polymerase subunit beta from Bordetella bronchiseptica (strain ATCC BAA-588 / NCTC 13252 / RB50) (Alcaligenes bronchisepticus).